The sequence spans 171 residues: RxLR effector protein CRE7 (171 aa).

The signal sequence occupies residues 1 to 23 (MRAIAILLAVVATIFASLHGVSA). A RxLR-dEER motif is present at residues 46 to 59 (RRLRQTGDASDEER).

The protein belongs to the RxLR effector family.

It is found in the secreted. It localises to the host cell. Functionally, effector that is involved in host plant infection. Contributes to virulence during the early infection stage, by inhibiting plant defense responses induced by both PAMP-triggered immunity (PTI) and effector-triggered immunity (ETI). The polypeptide is RxLR effector protein CRE7 (Phytophthora infestans (strain T30-4) (Potato late blight agent)).